The following is a 61-amino-acid chain: Protein transport protein Sec61 subunit beta (61 aa).

Over 1–35 (MKRPSTQRAPATVNKGGNSMMKFYSEDAIGLKVGP) the chain is Cytoplasmic. A helical membrane pass occupies residues 36–56 (TAVLFMSLIFIAFVIILHIMG). Over 57 to 61 (KYTRS) the chain is Extracellular.

This sequence belongs to the SEC61-beta family. As to quaternary structure, the SEC61 channel-forming translocon complex.

It localises to the endoplasmic reticulum membrane. Component of SEC61 channel-forming translocon complex that mediates transport of signal peptide-containing precursor polypeptides across the endoplasmic reticulum (ER). Forms a ribosome receptor and a gated pore in the ER membrane, both functions required for cotranslational translocation of nascent polypeptides. This is Protein transport protein Sec61 subunit beta (sec61b) from Dictyostelium discoideum (Social amoeba).